Reading from the N-terminus, the 318-residue chain is Myeloid-associated differentiation marker (318 aa).

MARVEL domains follow at residues 25 to 157 (ALTQ…ARPG) and 162 to 315 (YMAT…RLVF). The next 8 membrane-spanning stretches (helical) occupy residues 35–55 (LLQLVSTCVAFSLVASVGAWT), 58–78 (MGNWAMFTWCFCFAVTLIILI), 95–115 (FPITFACYAALFCLSSSIIYP), 131–151 (AIAATTFSCVACLAYATEVAW), 165–185 (TVPGLLKVFETFVACIIFAFI), 197–217 (LEWCVAVYAICFILAAVTVLL), 233–253 (FLSGLALLSVLLYATAIVLWP), and 290–310 (LAVSILTGINLLAYVSDLVYS).

It belongs to the MAL family.

It localises to the membrane. The protein is Myeloid-associated differentiation marker (Myadm) of Rattus norvegicus (Rat).